A 326-amino-acid polypeptide reads, in one-letter code: Deoxyuridine 5'-triphosphate nucleotidohydrolase (326 aa).

Residues 218-220 (RSS) and 321-322 (FG) contribute to the substrate site.

It belongs to the dUTPase family. Mg(2+) is required as a cofactor.

The enzyme catalyses dUTP + H2O = dUMP + diphosphate + H(+). Its function is as follows. Involved in nucleotide metabolism: produces dUMP, the immediate precursor of thymidine nucleotides and decreases the intracellular concentration of dUTP to avoid uracil incorporation into viral DNA. This Equus caballus (Horse) protein is Deoxyuridine 5'-triphosphate nucleotidohydrolase.